A 302-amino-acid chain; its full sequence is Negative regulator of the PHO system (302 aa).

One can recognise a Protein kinase domain in the interval 6–296 (FKQLEKLGNG…AKQALLHPWF (291 aa)). ATP-binding positions include 12-20 (LGNGTYATV) and K35. D132 functions as the Proton acceptor in the catalytic mechanism.

Belongs to the protein kinase superfamily. CMGC Ser/Thr protein kinase family. CDC2/CDKX subfamily. In terms of assembly, interacts with a number of cyclins.

The enzyme catalyses L-seryl-[protein] + ATP = O-phospho-L-seryl-[protein] + ADP + H(+). The catalysed reaction is L-threonyl-[protein] + ATP = O-phospho-L-threonyl-[protein] + ADP + H(+). Functionally, when phosphate concentrations are high it phosphorylates the PHO4 transcription factor thus establishing repression. This chain is Negative regulator of the PHO system (PHO85), found in Candida glabrata (strain ATCC 2001 / BCRC 20586 / JCM 3761 / NBRC 0622 / NRRL Y-65 / CBS 138) (Yeast).